The primary structure comprises 104 residues: uncharacterized protein (104 aa).

Residues 77 to 98 form a helical membrane-spanning segment; the sequence is IAAVRANIIICACFFYLFCYCS.

It localises to the membrane. This is an uncharacterized protein from Saccharomyces cerevisiae (strain ATCC 204508 / S288c) (Baker's yeast).